Consider the following 340-residue polypeptide: uncharacterized protein (340 aa).

The segment at 6–70 adopts an RING-CH-type zinc-finger fold; it reads KYEKSSARCW…PQCLTAYRIA (65 aa). 8 residues coordinate Zn(2+): cysteine 14, cysteine 17, cysteine 37, cysteine 39, histidine 44, cysteine 47, cysteine 60, and cysteine 63. 3 helical membrane passes run 249 to 269, 274 to 294, and 300 to 320; these read EFWI…TKIL, PILL…GNFT, and IIGA…FIAW.

The protein localises to the membrane. This is an uncharacterized protein from Schizosaccharomyces pombe (strain 972 / ATCC 24843) (Fission yeast).